A 328-amino-acid chain; its full sequence is Sterol demethylase protein B (328 aa).

Belongs to the NAD(P)-dependent epimerase/dehydratase family.

It catalyses the reaction a 3beta-hydroxy-4alpha-methylsteroid-4beta-carboxylate + NAD(+) = a 4alpha-methyl-3-oxosteroid + CO2 + NADH. It carries out the reaction a 3beta-hydroxy-4alpha-methylsteroid-4beta-carboxylate + NADP(+) = a 4alpha-methyl-3-oxosteroid + CO2 + NADPH. The enzyme catalyses 4beta-carboxy-4alpha-methyl-5alpha-cholesta-8,24-dien-3beta-ol + NAD(+) = 3-dehydro-4alpha-methylzymosterol + CO2 + NADH. The catalysed reaction is 4beta-carboxy-4alpha-methyl-5alpha-cholesta-8,24-dien-3beta-ol + NADP(+) = 3-dehydro-4alpha-methylzymosterol + CO2 + NADPH. It catalyses the reaction 3-dehydro-4alpha-methylzymosterol + NADPH + H(+) = 4alpha-methylzymosterol + NADP(+). It participates in steroid biosynthesis; sterol biosynthesis. Participates in the biosynthesis of bacterial sterols. Together with SdmA, removes one methyl group from the C-4 position of 4,4-dimethylated steroid molecules. SdmB catalyzes an oxidative decarboxylation that results in reduction of the 3beta-hydroxy group at the C-3 carbon to an oxo group. It also functions as a ketoreductase that converts the C-3 oxo group back to a hydroxyl group after C-4 demethylation. The protein is Sterol demethylase protein B of Methylococcus capsulatus (strain ATCC 33009 / NCIMB 11132 / Bath).